The chain runs to 603 residues: MASEHLEHKLALLPDKPGCYLMKNINDQIIYVGKAKNLKNRVRSYFKSSHTGKVAKMVSEVADFETIVTSTNKESFLLEITLIQKHQPYFNIKLKKGTGYPYIKITNERDPQIKIVSKIKKDGGYYFGPYPNVYAAEETMHFIQKVYPLRRCNGYQGRPCLYYHMGQCLGACFKEVPKSDYEEQIKKIKSFLSGNTATVKRQLTKKMQRAAENMEFERAAEIRDQLHYIEVTVEKQKIISNDKTPRDLFNFYMDKGWLSIQIFFIRQARLMKREKRLFPIVDTAVEEMTSFILQFYNRRNNILPHEILLPKGLPNKEISEILGVPVRTPVRGEKRDLLAMAHENAQLSLDEKFRLLEMDQSKTTGAMKEITDALGLPEGHRIEAFDHSHIQGADPVSAMVVFINGEPAKNFYRKYKLKTVINHADEAASTREVIRRRYSRLLKENKPMPDMIFMDGGEIQMDAAKDVLENELGLEIPVVGMVKNDKHQTADLLFGDDDHHINLNPRSQGFYLVQRIQDEVHRFAITFHRRVHTKHSLSSRLDEIKGVGPRTRTKLLKKYGSITKIAQASVDEIHSLGINRPTAQLIKVSLQKNAEVAKGSSHD.

In terms of domain architecture, GIY-YIG spans 15-92 (DKPGCYLMKN…IQKHQPYFNI (78 aa)). Residues 197–232 (ATVKRQLTKKMQRAAENMEFERAAEIRDQLHYIEVT) form the UVR domain.

The protein belongs to the UvrC family. Interacts with UvrB in an incision complex.

It is found in the cytoplasm. In terms of biological role, the UvrABC repair system catalyzes the recognition and processing of DNA lesions. UvrC both incises the 5' and 3' sides of the lesion. The N-terminal half is responsible for the 3' incision and the C-terminal half is responsible for the 5' incision. The protein is UvrABC system protein C of Limosilactobacillus reuteri (strain DSM 20016) (Lactobacillus reuteri).